The sequence spans 512 residues: tRNA-2-methylthio-N(6)-dimethylallyladenosine synthase (512 aa).

One can recognise an MTTase N-terminal domain in the interval 23–139 (RTYQVRTYGC…LPTLLERARH (117 aa)). Residues Cys32, Cys68, Cys102, Cys176, Cys180, and Cys183 each contribute to the [4Fe-4S] cluster site. In terms of domain architecture, Radical SAM core spans 162–398 (RESAYAAWVS…IELQERISLE (237 aa)). One can recognise a TRAM domain in the interval 401-469 (REQVGRAVEL…PHHLIADAPI (69 aa)). The disordered stretch occupies residues 477–512 (AGDAHAAGQKPRTGVGLGMPRIGAPAPSATAEGCGC).

Belongs to the methylthiotransferase family. MiaB subfamily. As to quaternary structure, monomer. [4Fe-4S] cluster is required as a cofactor.

Its subcellular location is the cytoplasm. The enzyme catalyses N(6)-dimethylallyladenosine(37) in tRNA + (sulfur carrier)-SH + AH2 + 2 S-adenosyl-L-methionine = 2-methylsulfanyl-N(6)-dimethylallyladenosine(37) in tRNA + (sulfur carrier)-H + 5'-deoxyadenosine + L-methionine + A + S-adenosyl-L-homocysteine + 2 H(+). Catalyzes the methylthiolation of N6-(dimethylallyl)adenosine (i(6)A), leading to the formation of 2-methylthio-N6-(dimethylallyl)adenosine (ms(2)i(6)A) at position 37 in tRNAs that read codons beginning with uridine. The chain is tRNA-2-methylthio-N(6)-dimethylallyladenosine synthase from Mycolicibacterium smegmatis (strain ATCC 700084 / mc(2)155) (Mycobacterium smegmatis).